The chain runs to 870 residues: Eukaryotic translation initiation factor 3 subunit C (870 aa).

Positions 1–92 (MSRFFRGDSS…GVKVVKSAKN (92 aa)) are disordered. Positions 14–54 (SSDEEEDLYSDDEEVQEQPEEESEEDDSEEDDDDDDSDSSS) are enriched in acidic residues. The PCI domain maps to 608 to 782 (FHMHINLELL…SSIIFRKGVE (175 aa)). Residues 807–870 (TLETRTQGTA…ALGAAVGSRA (64 aa)) are disordered. Residues 824–844 (GRGGRGGNRGGRGGNRGGRGG) show a composition bias toward gly residues.

This sequence belongs to the eIF-3 subunit C family. Component of the eukaryotic translation initiation factor 3 (eIF-3) complex.

The protein resides in the cytoplasm. Component of the eukaryotic translation initiation factor 3 (eIF-3) complex, which is involved in protein synthesis of a specialized repertoire of mRNAs and, together with other initiation factors, stimulates binding of mRNA and methionyl-tRNAi to the 40S ribosome. The eIF-3 complex specifically targets and initiates translation of a subset of mRNAs involved in cell proliferation. The chain is Eukaryotic translation initiation factor 3 subunit C (nip1) from Sclerotinia sclerotiorum (strain ATCC 18683 / 1980 / Ss-1) (White mold).